A 71-amino-acid chain; its full sequence is Putative antitoxin VapB15 (71 aa).

Belongs to the UPF0330 family.

Possibly the antitoxin component of a type II toxin-antitoxin (TA) system. Its cognate toxin is VapC15 (Potential). The sequence is that of Putative antitoxin VapB15 (vapB15) from Archaeoglobus fulgidus (strain ATCC 49558 / DSM 4304 / JCM 9628 / NBRC 100126 / VC-16).